The following is a 360-amino-acid chain: Galactoside alpha-(1,2)-fucosyltransferase 1 (360 aa).

The Cytoplasmic portion of the chain corresponds to 1 to 8 (MWAPGHHH). Residues 9–27 (LCLIFLLTCVFACVFFLLI) traverse the membrane as a helical; Signal-anchor for type II membrane protein segment. At 28–360 (HQNLFHSGLD…GINADLSPLQ (333 aa)) the chain is on the lumenal side. Asn-65, Asn-301, and Asn-327 each carry an N-linked (GlcNAc...) asparagine glycan.

The protein belongs to the glycosyltransferase 11 family. As to expression, expressed in brain, intestine and kidney.

The protein resides in the golgi apparatus. The protein localises to the golgi stack membrane. The enzyme catalyses a ganglioside GM1 + GDP-beta-L-fucose = a ganglioside Fuc-GM1 + GDP + H(+). The catalysed reaction is a beta-D-galactosyl-(1-&gt;4)-N-acetyl-beta-D-glucosaminyl derivative + GDP-beta-L-fucose = an alpha-L-Fuc-(1-&gt;2)-beta-D-Gal-(1-&gt;4)-beta-D-GlcNAc derivative + GDP + H(+). It catalyses the reaction a ganglioside GA1 + GDP-beta-L-fucose = a ganglioside Fuc-GA1 + GDP + H(+). It carries out the reaction a beta-D-Gal-(1-&gt;3)-beta-D-GlcNAc-(1-&gt;3)-beta-D-Gal-(1-&gt;4)-beta-D-Glc-(1&lt;-&gt;1')-Cer(d18:1(4E)) + GDP-beta-L-fucose = alpha-L-fucosyl-(1-&gt;2)- beta-D-galactosyl-(1-&gt;3)-N-acetyl-beta-D-glucosaminyl-(1-&gt;3)-beta-D-galactosyl-(1-&gt;4)-beta-D-glucosyl-(1&lt;-&gt;1')-N-acylsphing-4-enine + GDP + H(+). The enzyme catalyses a neolactoside nLc4Cer(d18:1(4E)) + GDP-beta-L-fucose = a neolactoside IV(2)-alpha-Fuc-nLc4Cer(d18:1(4E)) + GDP + H(+). The catalysed reaction is beta-D-galactosyl-(1-&gt;3)-N-acetyl-D-galactosamine + GDP-beta-L-fucose = alpha-L-fucosyl-(1-&gt;2)-beta-D-galactosyl-(1-&gt;3)-N-acetyl-D-galactosamine + GDP + H(+). The protein operates within protein modification; protein glycosylation. Its function is as follows. Catalyzes the transfer of L-fucose, from a guanosine diphosphate-beta-L-fucose, to the terminal galactose residue of glycoconjugates through an alpha(1,2) linkage leading to H antigen synthesis that is an intermediate substrate in the synthesis of ABO blood group antigens. H antigen is essential for maturation of the glomerular layer of the main olfactory bulb, in cell migration and early cell-cell contacts during tumor associated angiogenesis. Preferentially fucosylates soluble lactose and to a lesser extent, fucosylates glycolipids gangliosides GA1 and GM1a. The polypeptide is Galactoside alpha-(1,2)-fucosyltransferase 1 (Bos taurus (Bovine)).